Reading from the N-terminus, the 67-residue chain is Bowman-Birk type proteinase inhibitor A6 (67 aa).

6 disulfides stabilise this stretch: C9-C66, C10-C29, C13-C62, C16-C27, C36-C43, and C40-C54.

The protein belongs to the Bowman-Birk serine protease inhibitor family. As to expression, expressed in bulb (at protein level).

Serine protease inhibitor. Strongly inhibits trypsin (Ki = 4 nM) and elastase (Ki = 4.8 nM). Also inhibits chymotrypsin with a Ki of 22 nM. Does not inhibit bacterial subtilisin. The protein is Bowman-Birk type proteinase inhibitor A6 of Hyacinthus orientalis (Common hyacinth).